Reading from the N-terminus, the 394-residue chain is Major outer membrane porin, serovar B (394 aa).

The signal sequence occupies residues 1 to 22 (MKKLLKSVLVFAALSSASSLQA).

It belongs to the chlamydial porin (CP) (TC 1.B.2) family. In terms of assembly, part of a disulfide cross-linked outer membrane complex (COMC) composed of the major outer membrane porin (MOMP), the small cysteine-rich protein (OmcA) and the large cysteine-rich periplasmic protein (OmcB).

The protein resides in the cell outer membrane. In terms of biological role, in elementary bodies (EBs, the infectious stage, which is able to survive outside the host cell) provides the structural integrity of the outer envelope through disulfide cross-links with the small cysteine-rich protein and the large cysteine-rich periplasmic protein. It has been described in publications as the Sarkosyl-insoluble COMC (Chlamydia outer membrane complex), and serves as the functional equivalent of peptidoglycan. Functionally, permits diffusion of specific solutes through the outer membrane. The chain is Major outer membrane porin, serovar B (ompA) from Chlamydia trachomatis.